Here is a 425-residue protein sequence, read N- to C-terminus: Dihydroorotase (425 aa).

The Zn(2+) site is built by H56 and H58. Residues 58–60 (HYR) and N90 contribute to the substrate site. Zn(2+) is bound by residues D148, H175, and H228. A substrate-binding site is contributed by N274. Position 301 (D301) interacts with Zn(2+). D301 is a catalytic residue. Substrate-binding positions include H305 and 319–320 (FG).

It belongs to the metallo-dependent hydrolases superfamily. DHOase family. Class I DHOase subfamily. Zn(2+) serves as cofactor.

It carries out the reaction (S)-dihydroorotate + H2O = N-carbamoyl-L-aspartate + H(+). It functions in the pathway pyrimidine metabolism; UMP biosynthesis via de novo pathway; (S)-dihydroorotate from bicarbonate: step 3/3. Its function is as follows. Catalyzes the reversible cyclization of carbamoyl aspartate to dihydroorotate. The sequence is that of Dihydroorotase from Lactobacillus helveticus (strain DPC 4571).